Consider the following 144-residue polypeptide: MKIALIAHDEKKAEMVAFATAYAPVLANHELYATGTTGLRIQEATGLAVHRFQSGPYGGDQEIGAMIARNEMDLVIFFRDPLTAQPHEPDISALMRLCDVYAVPLATNIGTAELLIRGLERGDLAWRNIVHGRAKSGEEKETER.

The MGS-like domain maps to 1-144; it reads MKIALIAHDE…KSGEEKETER (144 aa). Residues His8, Lys12, 34–37, and 54–55 contribute to the substrate site; these read TGTT and SG. Asp60 acts as the Proton donor/acceptor in catalysis. Residue His87 coordinates substrate.

This sequence belongs to the methylglyoxal synthase family.

It catalyses the reaction dihydroxyacetone phosphate = methylglyoxal + phosphate. In terms of biological role, catalyzes the formation of methylglyoxal from dihydroxyacetone phosphate. This Geobacillus thermodenitrificans (strain NG80-2) protein is Methylglyoxal synthase.